Reading from the N-terminus, the 440-residue chain is Transposon Ty1-BL Gag polyprotein (440 aa).

Polar residues-rich tracts occupy residues 20–31 (SVTSKEVQTTQD), 46–55 (VSTQANSQQP), and 137–168 (VGTH…TNQH). 3 disordered regions span residues 20-84 (SVTS…QNGP), 137-173 (VGTH…RPPP), and 350-424 (QQES…TTEP). The tract at residues 299–401 (NNGIPINNKV…NSQSRTARAH (103 aa)) is RNA-binding. Residues 363-372 (SPSDEKKDSR) show a composition bias toward basic and acidic residues. Residues 373–411 (TYTNTTKPKSITRNSQKPNNSQSRTARAHNVSTFNNSPG) are compositionally biased toward polar residues.

Homotrimer.

It localises to the cytoplasm. In terms of biological role, capsid protein (CA) is the structural component of the virus-like particle (VLP), forming the shell that encapsulates the retrotransposons dimeric RNA genome. The particles are assembled from trimer-clustered units and there are holes in the capsid shells that allow for the diffusion of macromolecules. CA also has nucleocapsid-like chaperone activity, promoting primer tRNA(i)-Met annealing to the multipartite primer-binding site (PBS), dimerization of Ty1 RNA and initiation of reverse transcription. This Saccharomyces cerevisiae (strain ATCC 204508 / S288c) (Baker's yeast) protein is Transposon Ty1-BL Gag polyprotein (TY1A-BL).